A 408-amino-acid polypeptide reads, in one-letter code: Probable serine/threonine-protein kinase PBL16 (408 aa).

Gly2 carries the N-myristoyl glycine lipid modification. A lipid anchor (S-palmitoyl cysteine) is attached at Cys4. Residues 17-50 (ANAKSESPKEQSPTVEDKHIKEVQKLPSNPKEVE) are disordered. The span at 18-30 (NAKSESPKEQSPT) shows a compositional bias: polar residues. Residues 31–40 (VEDKHIKEVQ) are compositionally biased toward basic and acidic residues. Thr65 carries the phosphothreonine modification. A Protein kinase domain is found at 76–360 (FRQDRVLGGG…DIVDSLEPLQ (285 aa)). Residues 82 to 90 (LGGGGFGSV) and Lys113 each bind ATP. The residue at position 159 (Tyr159) is a Phosphotyrosine. The Proton acceptor role is filled by Asp209. Phosphoserine occurs at positions 213 and 243. Thr244 and Thr249 each carry phosphothreonine. Tyr257 carries the post-translational modification Phosphotyrosine.

The protein belongs to the protein kinase superfamily. Ser/Thr protein kinase family. Palmitoylation at Cys-4 and Cys-6 are required for plasma membrane location.

It is found in the cell membrane. It carries out the reaction L-seryl-[protein] + ATP = O-phospho-L-seryl-[protein] + ADP + H(+). The catalysed reaction is L-threonyl-[protein] + ATP = O-phospho-L-threonyl-[protein] + ADP + H(+). Its function is as follows. May be involved in plant defense signaling. The polypeptide is Probable serine/threonine-protein kinase PBL16 (Arabidopsis thaliana (Mouse-ear cress)).